The following is a 174-amino-acid chain: Secreted cysteine-rich protein UMAG_00792 (174 aa).

Positions 1 to 26 (MVSFKSSSLFLHSLSALLVLTTLSSA) are cleaved as a signal peptide. An N-linked (GlcNAc...) asparagine glycan is attached at asparagine 77.

In terms of assembly, secreted cysteine-rich proteins (SCRPs) are predicted to form amyloids.

It is found in the secreted. Functionally, secreted cysteine-rich protein that might form amyloid strutures which are involved in attachment to hydrophobic surfaces and in formation of hydrophobic aerial hyphae. This Mycosarcoma maydis (Corn smut fungus) protein is Secreted cysteine-rich protein UMAG_00792.